Reading from the N-terminus, the 675-residue chain is Probable potassium transport system protein Kup (675 aa).

A compositionally biased stretch (basic and acidic residues) spans 1–12; that stretch reads MEPAMPEHDGDH. Residues 1–25 form a disordered region; it reads MEPAMPEHDGDHASNPPHGVGIPND. 12 consecutive transmembrane segments (helical) span residues 62–82, 104–124, 153–173, 195–215, 222–242, 255–275, 300–320, 332–352, 390–410, 419–439, 450–470, and 472–492; these read ALLA…LYAL, LASL…VILI, WLFG…SIIT, IIIP…VLGT, FGPI…KGIF, FALE…GSVV, WLFF…ALLI, LLVP…ATVI, IYLP…VLAF, AYGI…MVVF, VAIV…ANVL, and IPDG…IMTT.

It belongs to the HAK/KUP transporter (TC 2.A.72) family.

The protein resides in the cell inner membrane. It carries out the reaction K(+)(in) + H(+)(in) = K(+)(out) + H(+)(out). Transport of potassium into the cell. Likely operates as a K(+):H(+) symporter. The sequence is that of Probable potassium transport system protein Kup from Gluconobacter oxydans (strain 621H) (Gluconobacter suboxydans).